We begin with the raw amino-acid sequence, 466 residues long: 3-isopropylmalate dehydratase large subunit (466 aa).

Residues Cys347, Cys407, and Cys410 each coordinate [4Fe-4S] cluster.

It belongs to the aconitase/IPM isomerase family. LeuC type 1 subfamily. In terms of assembly, heterodimer of LeuC and LeuD. The cofactor is [4Fe-4S] cluster.

It carries out the reaction (2R,3S)-3-isopropylmalate = (2S)-2-isopropylmalate. The protein operates within amino-acid biosynthesis; L-leucine biosynthesis; L-leucine from 3-methyl-2-oxobutanoate: step 2/4. Functionally, catalyzes the isomerization between 2-isopropylmalate and 3-isopropylmalate, via the formation of 2-isopropylmaleate. This Enterobacter sp. (strain 638) protein is 3-isopropylmalate dehydratase large subunit.